Consider the following 308-residue polypeptide: Pyrroline-5-carboxylate reductase 3 (308 aa).

Belongs to the pyrroline-5-carboxylate reductase family. Homodecamer; composed of 5 homodimers.

The protein localises to the cytoplasm. It carries out the reaction L-proline + NADP(+) = (S)-1-pyrroline-5-carboxylate + NADPH + 2 H(+). The enzyme catalyses L-proline + NAD(+) = (S)-1-pyrroline-5-carboxylate + NADH + 2 H(+). It participates in amino-acid biosynthesis; L-proline biosynthesis; L-proline from L-glutamate 5-semialdehyde: step 1/1. Functionally, oxidoreductase that catalyzes the last step in proline biosynthesis, which corresponds to the reduction of pyrroline-5-carboxylate (P5C) to L-proline using NAD(P)H. Proline is synthesized from either glutamate or ornithine; both are converted to P5C, and then to proline via pyrroline-5-carboxylate reductases (PYCRs). PYCR3 is exclusively linked to the biosynthesis of proline from ornithine. The protein is Pyrroline-5-carboxylate reductase 3 of Bos taurus (Bovine).